The primary structure comprises 175 residues: Zinc finger A20 and AN1 domain-containing stress-associated protein 7 (175 aa).

An A20-type zinc finger spans residues 13–47 (PTEPKLCDNGCGFFGSPSNMNLCSKCYRSLRAEED). 12 residues coordinate Zn(2+): cysteine 19, cysteine 23, cysteine 35, cysteine 38, cysteine 116, cysteine 119, cysteine 130, cysteine 132, cysteine 137, histidine 140, histidine 146, and cysteine 148. The AN1-type zinc finger occupies 110 to 156 (VRPNNRCFSCNKKVGVMGFKCKCGSTFCGSHRYPEKHECSFDFKEVG).

Functionally, may be involved in environmental stress response. The protein is Zinc finger A20 and AN1 domain-containing stress-associated protein 7 (SAP7) of Arabidopsis thaliana (Mouse-ear cress).